A 554-amino-acid polypeptide reads, in one-letter code: Glucose-6-phosphate isomerase 2 (554 aa).

The active-site Proton donor is the E359. Active-site residues include H390 and K518.

It belongs to the GPI family.

It localises to the cytoplasm. The catalysed reaction is alpha-D-glucose 6-phosphate = beta-D-fructose 6-phosphate. It functions in the pathway carbohydrate biosynthesis; gluconeogenesis. The protein operates within carbohydrate degradation; glycolysis; D-glyceraldehyde 3-phosphate and glycerone phosphate from D-glucose: step 2/4. Its function is as follows. Catalyzes the reversible isomerization of glucose-6-phosphate to fructose-6-phosphate. The polypeptide is Glucose-6-phosphate isomerase 2 (Pseudomonas putida (strain ATCC 47054 / DSM 6125 / CFBP 8728 / NCIMB 11950 / KT2440)).